A 204-amino-acid chain; its full sequence is uncharacterized protein (204 aa).

The segment at 1–20 (MQNPLPEVMSPEHDKRTTTP) is disordered.

This is an uncharacterized protein from Frog virus 3 (isolate Goorha) (FV-3).